A 416-amino-acid polypeptide reads, in one-letter code: MFSFFRRKKKQETPALEEAQVQETAAKVESEVAQIVGNIKEDVESLAESVKGRAESAVETVSGAVEQVKETVAEMPSEAGEAAERVESAKEAVAETVGEAVGQVQEAVATTEEHKLGWAARLKQGLAKSRDKMAKSLAGVFGGGQIGEDLYEELETVLITGDMGMEATEYLMKDVRGRVSLKGLKDGNELRGALKEALYDLIKPLEKPLVLPETKEPFVIMLAGINGAGKTTSIGKLAKYFQAQGKSVLLAAGDTFRAAAREQLQAWGGRNNVTVISQTTGDSAAVCFDAVQAAKARIDIVLADTAGRLPTQLHLMEEIKKVKRVLQKAIPGAPHEIIVVLDANIGQNAVNQVKAFDDALGLTGLIVTKLDGTAKGGILAALASDRPVPVRYIGVGEGIDDLRPFDARAFVDRLLD.

A compositionally biased stretch (basic residues) spans 1 to 10 (MFSFFRRKKK). The segment at 1-24 (MFSFFRRKKKQETPALEEAQVQET) is disordered. GTP-binding positions include 224-231 (GINGAGKT), 304-308 (DTAGR), and 368-371 (TKLD).

The protein belongs to the GTP-binding SRP family. FtsY subfamily. In terms of assembly, part of the signal recognition particle protein translocation system, which is composed of SRP and FtsY. SRP is a ribonucleoprotein composed of Ffh and a 4.5S RNA molecule. It depends on Mg(2+) as a cofactor.

The protein localises to the cell membrane. The protein resides in the cytoplasm. The enzyme catalyses GTP + H2O = GDP + phosphate + H(+). Involved in targeting and insertion of nascent membrane proteins into the cytoplasmic membrane. Acts as a receptor for the complex formed by the signal recognition particle (SRP) and the ribosome-nascent chain (RNC). Interaction with SRP-RNC leads to the transfer of the RNC complex to the Sec translocase for insertion into the membrane, the hydrolysis of GTP by both Ffh and FtsY, and the dissociation of the SRP-FtsY complex into the individual components. The chain is Signal recognition particle receptor FtsY from Neisseria gonorrhoeae.